Consider the following 304-residue polypeptide: Mitochondrial glycine transporter (304 aa).

3 Solcar repeats span residues 25 to 114 (HPVI…LKQY), 121 to 205 (PTAL…TKNI), and 215 to 299 (LIPI…MMAK). 6 helical membrane-spanning segments follow: residues 31–56 (FLCGSISGTCSTLLFQPLDLLKTRLQ), 89–115 (GMSPSIVRCVPGVGIYFGTLYSLKQYF), 127–152 (VMLGVGSRSVAGVCMSPITVIKTRYE), 180–203 (GLTATLLRDAPFSGIYLMFYNQTK), 219–245 (TNFSCGIFAGILASLVTQPADVIKTHM), and 274–292 (GGIPRALRRTLMAAMAWTV).

The protein belongs to the mitochondrial carrier (TC 2.A.29) family. SLC25A38 subfamily. As to expression, preferentially expressed in erythroid cells.

The protein localises to the mitochondrion inner membrane. It catalyses the reaction glycine(in) = glycine(out). Its function is as follows. Mitochondrial glycine transporter that imports glycine into the mitochondrial matrix. Plays an important role in providing glycine for the first enzymatic step in heme biosynthesis, the condensation of glycine with succinyl-CoA to produce 5-aminolevulinate (ALA) in the mitochondrial matrix. Required during erythropoiesis. Functionally, plays a role as pro-apoptotic protein that induces caspase-dependent apoptosis. The chain is Mitochondrial glycine transporter from Homo sapiens (Human).